Here is a 1628-residue protein sequence, read N- to C-terminus: THO complex subunit 2 (1628 aa).

2 stretches are compositionally biased toward basic and acidic residues: residues 1 to 10 and 1360 to 1399; these read MTSLPEKDQQ and TDNK…EGNR. Disordered stretches follow at residues 1–21 and 1337–1628; these read MTSL…NQKK and VALN…RKIQ. Thr-1406 and Thr-1408 each carry phosphothreonine. The span at 1411–1429 shows a compositional bias: basic and acidic residues; the sequence is DIQRSDSKLREDQSRDRTP. Residues 1430-1444 are compositionally biased toward polar residues; the sequence is QSRSFTNENNDNLRS. Residues 1461–1474 show a composition bias toward basic and acidic residues; that stretch reads ARREHESQKSDRWR. The span at 1476–1493 shows a compositional bias: low complexity; the sequence is NGNVNRNPRVSNNNSTNV. Basic and acidic residues predominate over residues 1494–1526; that stretch reads SRERSSEANHRTSNDNKRDEVTEGKDKNKRQDI. Polar residues predominate over residues 1527–1550; it reads SGESNSRQNNAISRAGRSNGSNRG. The span at 1551 to 1560 shows a compositional bias: basic and acidic residues; that stretch reads NDSRDADGRR. Phosphoserine is present on Ser-1577. Positions 1581-1628 are enriched in basic and acidic residues; sequence LREEDERENSRRRARQDDRRDRDSRQQRDRPRDRTSRSAREEKRRKIQ.

It belongs to the THOC2 family. As to quaternary structure, component of the THO complex. THO associates with DNA and RNA in vitro.

The protein localises to the nucleus. Its function is as follows. Component the THO subcomplex of the TREX complex, which operates in coupling transcription elongation to mRNA export. The THO complex is recruited to transcribed genes and moves along the gene with the elongating polymerase during transcription. THO is important for stabilizing nascent RNA in the RNA polymerase II elongation complex by preventing formation of DNA:RNA hybrids behind the elongating polymerase. This is THO complex subunit 2 (tho2) from Schizosaccharomyces pombe (strain 972 / ATCC 24843) (Fission yeast).